A 124-amino-acid chain; its full sequence is Large ribosomal subunit protein bL12 (124 aa).

The protein belongs to the bacterial ribosomal protein bL12 family. In terms of assembly, homodimer. Part of the ribosomal stalk of the 50S ribosomal subunit. Forms a multimeric L10(L12)X complex, where L10 forms an elongated spine to which 2 to 4 L12 dimers bind in a sequential fashion. Binds GTP-bound translation factors.

Functionally, forms part of the ribosomal stalk which helps the ribosome interact with GTP-bound translation factors. Is thus essential for accurate translation. The sequence is that of Large ribosomal subunit protein bL12 from Pelodictyon phaeoclathratiforme (strain DSM 5477 / BU-1).